The following is a 646-amino-acid chain: 1-deoxy-D-xylulose-5-phosphate synthase (646 aa).

Residues H86 and 127-129 (AHS) each bind thiamine diphosphate. D158 provides a ligand contact to Mg(2+). Thiamine diphosphate is bound by residues 159 to 160 (GA), N188, Y295, and E377. Position 188 (N188) interacts with Mg(2+).

This sequence belongs to the transketolase family. DXPS subfamily. As to quaternary structure, homodimer. Mg(2+) serves as cofactor. It depends on thiamine diphosphate as a cofactor.

It carries out the reaction D-glyceraldehyde 3-phosphate + pyruvate + H(+) = 1-deoxy-D-xylulose 5-phosphate + CO2. The protein operates within metabolic intermediate biosynthesis; 1-deoxy-D-xylulose 5-phosphate biosynthesis; 1-deoxy-D-xylulose 5-phosphate from D-glyceraldehyde 3-phosphate and pyruvate: step 1/1. In terms of biological role, catalyzes the acyloin condensation reaction between C atoms 2 and 3 of pyruvate and glyceraldehyde 3-phosphate to yield 1-deoxy-D-xylulose-5-phosphate (DXP). This Burkholderia cenocepacia (strain HI2424) protein is 1-deoxy-D-xylulose-5-phosphate synthase.